Reading from the N-terminus, the 501-residue chain is Cytochrome P450 90A3 (501 aa).

Residues 2–22 traverse the membrane as a helical segment; sequence AAAALLLLAAAAAIVVVAMVL. Cys446 provides a ligand contact to heme.

Belongs to the cytochrome P450 family. The cofactor is heme. Highly expressed in shoot apex and inflorenscence. Expressed in roots, stems, leaf blades and leaf sheaths.

The protein localises to the membrane. Its pathway is plant hormone biosynthesis; brassinosteroid biosynthesis. Its function is as follows. Catalyzes the C23-alpha-hydroxylation step in brassinosteroid biosynthesis. Converts 6-deoxocathasterone (6-deoxoCT) to 6-deoxoteasterone (6-deoxoTE) in the late C6-oxidation pathway and cathasterone (CT) to teasterone (TE) in the early C6-oxidation pathway of brassinolide (BL) biosynthesis. The protein is Cytochrome P450 90A3 of Oryza sativa subsp. japonica (Rice).